Here is a 517-residue protein sequence, read N- to C-terminus: MFS-type transporter avaJ (517 aa).

The segment covering 1-12 has biased composition (basic and acidic residues); sequence MTSPEHSEDERQ. The interval 1 to 28 is disordered; it reads MTSPEHSEDERQPLLTKPSGPDESQSGF. The helical transmembrane segment at 40-60 threads the bilayer; the sequence is AMWLLPMYTLYAITAGSLIIP. Asn63 is a glycosylation site (N-linked (GlcNAc...) asparagine). Transmembrane regions (helical) follow at residues 103 to 123, 131 to 151, 161 to 181, 204 to 224, and 230 to 250; these read IYGT…LMGF, PILL…LAAL, WLLV…ATTA, AAFT…LSVF, and AYWL…LALP. The N-linked (GlcNAc...) asparagine glycan is linked to Asn265. A run of 5 helical transmembrane segments spans residues 299 to 319, 338 to 358, 391 to 411, 442 to 462, and 476 to 496; these read MYIV…LVPL, FLTG…PLFM, LLLQ…LGVI, VLLG…PSGM, and ALFA…MFIG. Residues Asn497 and Asn512 are each glycosylated (N-linked (GlcNAc...) asparagine).

The protein belongs to the major facilitator superfamily. TCR/Tet family.

The protein localises to the membrane. It functions in the pathway secondary metabolite biosynthesis. In terms of biological role, MFS-type transporter; part of the cluster that mediates the biosynthesis of a highly modified cyclo-arginine-tryptophan dipeptide (cRW). This Aspergillus versicolor protein is MFS-type transporter avaJ.